The chain runs to 194 residues: NADH-quinone oxidoreductase subunit B (194 aa).

Positions 1-11 are enriched in pro residues; sequence MGVIATPPPSV. Residues 1–24 form a disordered region; sequence MGVIATPPPSVQGPSSQVPSSAPI. Low complexity predominate over residues 12 to 21; that stretch reads QGPSSQVPSS. [4Fe-4S] cluster contacts are provided by C72, C73, C137, and C167.

This sequence belongs to the complex I 20 kDa subunit family. NDH-1 is composed of 14 different subunits. Subunits NuoB, C, D, E, F, and G constitute the peripheral sector of the complex. Requires [4Fe-4S] cluster as cofactor.

It localises to the cell inner membrane. It catalyses the reaction a quinone + NADH + 5 H(+)(in) = a quinol + NAD(+) + 4 H(+)(out). Functionally, NDH-1 shuttles electrons from NADH, via FMN and iron-sulfur (Fe-S) centers, to quinones in the respiratory chain. The immediate electron acceptor for the enzyme in this species is believed to be ubiquinone. Couples the redox reaction to proton translocation (for every two electrons transferred, four hydrogen ions are translocated across the cytoplasmic membrane), and thus conserves the redox energy in a proton gradient. This is NADH-quinone oxidoreductase subunit B from Rhodospirillum centenum (strain ATCC 51521 / SW).